We begin with the raw amino-acid sequence, 372 residues long: M protein, serotype 2.2 (372 aa).

A signal peptide spans 1 to 41; sequence MARQQTKKNYSLRKLKTGTASVAVALTVLGAGFANQTEVRA. C repeat units lie at residues 124 to 158, 166 to 200, and 215 to 249; these read AKTT…EAKH, KKLT…EAKY, and QKLE…TSEL. Basic and acidic residues-rich tracts occupy residues 125–169, 226–246, and 260–274; these read KTTK…KKLT, TSRK…KKVT, and EESK…AELQ. Disordered stretches follow at residues 125–191 and 211–274; these read KTTK…ASRA and EAKH…AELQ. D repeat units follow at residues 275–280, 281–286, 289–294, and 296–301; these read AKLDAQ, GKALKE, AKQTEE, and AKLRAE. Basic and acidic residues predominate over residues 295 to 304; the sequence is LAKLRAEKAA. The tract at residues 295–344 is disordered; sequence LAKLRAEKAAGSKTPATKPANKERSGRAAQTATRPSQNKGMRSQLPSTGE. The segment covering 322–341 has biased composition (polar residues); that stretch reads AAQTATRPSQNKGMRSQLPS. An LPXTG sorting signal motif is present at residues 339–343; it reads LPSTG. T342 bears the Pentaglycyl murein peptidoglycan amidated threonine mark. The propeptide at 343 to 372 is removed by sortase; the sequence is GEAANPFFTAAAATVMVSAGMLALKRKEEN.

It belongs to the M protein family.

It is found in the secreted. It localises to the cell wall. This protein is one of the different antigenic serotypes of protein M. Protein M is closely associated with virulence of the bacterium and can render the organism resistant to phagocytosis. This chain is M protein, serotype 2.2 (emmL2.2), found in Streptococcus pyogenes.